The primary structure comprises 313 residues: WD repeat-containing protein 82 (313 aa).

WD repeat units lie at residues 19–58, 105–144, 146–184, 192–231, 236–276, and 280–313; these read ENSDKINCFDFSPNGETVISSSDDDSIVLYDCQEGKPKRT, GHSKRVVALSMSPVDDTFISGSLDKTIRLWDLRSPNCQGL, HLQGKPVCSFDPEGLIFAAGVNSEMVKLYDLRSFDKGPF, DRTCEWTGLKFSNDGKLILISTNGSFIRLIDAFKGVVMHT, ANSK…KVAV, and KHTGPITCLQFNPKFMTFASACSNMAFWLPTIDD.

This sequence belongs to the WD repeat SWD2 family. In terms of assembly, component of the SET1/COMPASS complex, at least composed of the catalytic subunit (SETD1A or SETD1B), WDR5, WDR82, RBBP5, ASH2L/ASH2, CXXC1/CFP1, HCFC1 and DPY30. Component of the PNUTS-PP1 phosphatase complex, composed of PPP1R10/PNUTS, TOX4, WDR82, and PPP1CA or PPP1CB or PPP1CC. Associated with multiple protein complexes including an RNA polymerase II complex, MLL3/MLL4 complex and a chaperonin-containing TCP1 complex. Interacts with SETD1B (via N-terminal region); the interaction is direct. Interacts with SETD1A (via N-terminal region); the interaction is direct. Interacts with CUL4B. Interacts with RBBP5. Interacts with POLR2B. Interacts with hyperphosphorylated C-terminal domain (CTD) of RNA polymerase II large subunit (POLR2A). Binds specifically to CTD heptad repeats phosphorylated on 'Ser-5' of each heptad. SETD1A enhances its interaction with POLR2A. Interacts with PPP1R10/PNUTS. Interacts with PPP1CA in the presence of PPP1R10/PNUTS. Interacts with ZC3H4; interaction is independent of the SET1 complex and promotes transcription termination of long non-coding RNAs (lncRNAs).

Its subcellular location is the nucleus. The protein resides in the chromosome. The protein localises to the cytoplasm. Its function is as follows. Regulatory component of the SET1/COMPASS complex implicated in the tethering of this complex to transcriptional start sites of active genes. Facilitates histone H3 'Lys-4' methylation (H3K4me) via recruitment of the SETD1A or SETD1B to the 'Ser-5' phosphorylated C-terminal domain (CTD) of RNA polymerase II large subunit (POLR2A). Component of the PNUTS-PP1 protein phosphatase complex, a protein phosphatase 1 (PP1) complex that promotes RNA polymerase II transcription pause-release, allowing transcription elongation. PNUTS-PP1 also plays a role in the control of chromatin structure and cell cycle progression during the transition from mitosis into interphase. Together with ZC3H4, but independently of the SET1 complex, part of a transcription termination checkpoint that promotes transcription termination of long non-coding RNAs (lncRNAs). The transcription termination checkpoint is activated by the inefficiently spliced first exon of lncRNAs and promotes transcription termination of lncRNAs and their subsequent degradation by the exosome. The sequence is that of WD repeat-containing protein 82 from Homo sapiens (Human).